The following is a 502-amino-acid chain: Probable cytochrome P450 313b1 (502 aa).

Heme is bound at residue cysteine 449.

Belongs to the cytochrome P450 family. The cofactor is heme.

It localises to the endoplasmic reticulum membrane. Its subcellular location is the microsome membrane. Functionally, may be involved in the metabolism of insect hormones and in the breakdown of synthetic insecticides. This chain is Probable cytochrome P450 313b1 (Cyp313b1), found in Drosophila melanogaster (Fruit fly).